The primary structure comprises 506 residues: Catalase (506 aa).

Residues His-73 and Asn-146 contribute to the active site. Heme is bound at residue Tyr-356. The Microbody targeting signal signature appears at 504-506 (SKF).

It belongs to the catalase family. As to quaternary structure, homotetramer. Heme is required as a cofactor.

It localises to the peroxisome matrix. It carries out the reaction 2 H2O2 = O2 + 2 H2O. Functionally, catalyzes the degradation of hydrogen peroxide (H(2)O(2)) generated by peroxisomal oxidases to water and oxygen, thereby protecting cells from the toxic effects of hydrogen peroxide. The sequence is that of Catalase (Cat) from Drosophila melanogaster (Fruit fly).